The sequence spans 209 residues: CAAX box protein 1 (209 aa).

The segment at 182–209 is disordered; it reads TAGRPPRDLSPSARPISSPPPETSCVLA. Cys206 is modified (cysteine methyl ester). Residue Cys206 is the site of S-farnesyl cysteine attachment. Residues 207-209 constitute a propeptide, removed in mature form; it reads VLA.

Ubiquitous.

Its subcellular location is the cell membrane. This Homo sapiens (Human) protein is CAAX box protein 1.